A 196-amino-acid chain; its full sequence is Phosphoheptose isomerase (196 aa).

Residues 36–196 (MTNCLINGGK…GIDALLLGVE (161 aa)) form the SIS domain. 51–53 (NGG) provides a ligand contact to substrate. Residues His-60 and Glu-64 each coordinate Zn(2+). Residues Glu-64, 93 to 94 (ND), 119 to 121 (STS), Ser-124, and Gln-174 each bind substrate. Gln-174 and His-182 together coordinate Zn(2+).

The protein belongs to the SIS family. GmhA subfamily. Homotetramer. Zn(2+) serves as cofactor.

The protein resides in the cytoplasm. The enzyme catalyses 2 D-sedoheptulose 7-phosphate = D-glycero-alpha-D-manno-heptose 7-phosphate + D-glycero-beta-D-manno-heptose 7-phosphate. It participates in carbohydrate biosynthesis; D-glycero-D-manno-heptose 7-phosphate biosynthesis; D-glycero-alpha-D-manno-heptose 7-phosphate and D-glycero-beta-D-manno-heptose 7-phosphate from sedoheptulose 7-phosphate: step 1/1. Catalyzes the isomerization of sedoheptulose 7-phosphate in D-glycero-D-manno-heptose 7-phosphate. This Dechloromonas aromatica (strain RCB) protein is Phosphoheptose isomerase.